The chain runs to 584 residues: J protein JJJ2 (584 aa).

Positions 13 to 77 (TYYSILGLTS…DQKLRYDRDL (65 aa)) constitute a J domain. The segment at 216 to 312 (YSEDPNSCLG…FSSGSHDSNL (97 aa)) is disordered. Ser-229 carries the phosphoserine modification. The span at 241–253 (QQQQQQQQQQQQQ) shows a compositional bias: low complexity. The span at 269-282 (KDNKESKRESRVSP) shows a compositional bias: basic and acidic residues. Positions 299-312 (KTSTFSSGSHDSNL) are enriched in polar residues.

It is found in the cytoplasm. The protein resides in the nucleus. The protein is J protein JJJ2 (JJJ2) of Saccharomyces cerevisiae (strain YJM789) (Baker's yeast).